We begin with the raw amino-acid sequence, 492 residues long: Trehalose-6-phosphate synthase (492 aa).

Arg-25 is a D-glucose 6-phosphate binding site. Gly-45–Gly-46 lines the UDP-alpha-D-glucose pocket. D-glucose 6-phosphate-binding residues include Tyr-101 and Asp-155. Positions 297 and 302 each coordinate UDP-alpha-D-glucose. Position 335 (Arg-335) interacts with D-glucose 6-phosphate. Residue Leu-400–Glu-404 coordinates UDP-alpha-D-glucose.

The protein belongs to the glycosyltransferase 20 family. As to quaternary structure, homotetramer.

The enzyme catalyses ADP-alpha-D-glucose + D-glucose 6-phosphate = alpha,alpha-trehalose 6-phosphate + ADP + H(+). It carries out the reaction CDP-alpha-D-glucose + D-glucose 6-phosphate = alpha,alpha-trehalose 6-phosphate + CDP + H(+). The catalysed reaction is GDP-alpha-D-glucose + D-glucose 6-phosphate = alpha,alpha-trehalose 6-phosphate + GDP + H(+). It catalyses the reaction TDP-alpha-D-glucose + D-glucose 6-phosphate = 5-methyl-UDP + alpha,alpha-trehalose 6-phosphate + H(+). The enzyme catalyses D-glucose 6-phosphate + UDP-alpha-D-glucose = alpha,alpha-trehalose 6-phosphate + UDP + H(+). Its pathway is glycan biosynthesis; trehalose biosynthesis. In terms of biological role, probably involved in the osmoprotection via the biosynthesis of trehalose and in the production of glycogen and alpha-glucan via the TreS-Pep2 branch involved in the biosynthesis of maltose-1-phosphate (M1P). Catalyzes the transfer of glucose from UDP-glucose (UDP-Glc) to D-glucose 6-phosphate (Glc-6-P) to form trehalose-6-phosphate. Probably also able to use ADP-Glc, CDP-Glc, GDP-Glc and TDP-Glc as glucosyl donors. This chain is Trehalose-6-phosphate synthase, found in Mycolicibacterium paratuberculosis (strain ATCC BAA-968 / K-10) (Mycobacterium paratuberculosis).